Here is a 243-residue protein sequence, read N- to C-terminus: Pyridoxine 5'-phosphate synthase (243 aa).

Position 9 (asparagine 9) interacts with 3-amino-2-oxopropyl phosphate. 11–12 is a 1-deoxy-D-xylulose 5-phosphate binding site; the sequence is DH. Arginine 20 serves as a coordination point for 3-amino-2-oxopropyl phosphate. The active-site Proton acceptor is the histidine 45. The 1-deoxy-D-xylulose 5-phosphate site is built by arginine 47 and histidine 52. Glutamate 72 serves as the catalytic Proton acceptor. Threonine 102 lines the 1-deoxy-D-xylulose 5-phosphate pocket. Histidine 193 acts as the Proton donor in catalysis. Residues glycine 194 and 215 to 216 each bind 3-amino-2-oxopropyl phosphate; that span reads GH.

It belongs to the PNP synthase family. In terms of assembly, homooctamer; tetramer of dimers.

The protein resides in the cytoplasm. It carries out the reaction 3-amino-2-oxopropyl phosphate + 1-deoxy-D-xylulose 5-phosphate = pyridoxine 5'-phosphate + phosphate + 2 H2O + H(+). The protein operates within cofactor biosynthesis; pyridoxine 5'-phosphate biosynthesis; pyridoxine 5'-phosphate from D-erythrose 4-phosphate: step 5/5. Its function is as follows. Catalyzes the complicated ring closure reaction between the two acyclic compounds 1-deoxy-D-xylulose-5-phosphate (DXP) and 3-amino-2-oxopropyl phosphate (1-amino-acetone-3-phosphate or AAP) to form pyridoxine 5'-phosphate (PNP) and inorganic phosphate. This is Pyridoxine 5'-phosphate synthase from Yersinia pseudotuberculosis serotype I (strain IP32953).